We begin with the raw amino-acid sequence, 58 residues long: Small ribosomal subunit protein bS21B (58 aa).

This sequence belongs to the bacterial ribosomal protein bS21 family.

The protein is Small ribosomal subunit protein bS21B of Trichormus variabilis (strain ATCC 29413 / PCC 7937) (Anabaena variabilis).